The following is a 204-amino-acid chain: Pectinesterase inhibitor 9 (204 aa).

Residues 1–23 form the signal peptide; sequence MELKNTIFLVILLSITILQSSSA. Residue N26 is glycosylated (N-linked (GlcNAc...) asparagine). 2 disulfides stabilise this stretch: C38-C47 and C106-C157.

The protein belongs to the PMEI family. In terms of assembly, binds reversibly to PME3 to inhibit its activity; the stability of the PME3-PMEI9 complex and the inhibition of the pectin methylesterase (PME) activity is pH-dependent, based on protonation status of amino-acids at the complex interface. In terms of tissue distribution, highly expressed in roots and etiolated hypocotyls. Expressed in seedlings, leaves, stems, siliques, floral buds and mature seeds.

Its subcellular location is the secreted. It localises to the extracellular space. The protein localises to the apoplast. Pectin methylesterase (PME) inhibitor that probably targets root-expressed PME and PME3 in a moderate pH-dependent manner, mainly in slightly acidic conditions (pH 6.3 and 5.0) and to some extent at pH 7.5; this processus relies on changes in the protonation of amino acids involved in intermolecular and intramolecular interactions. Regulates de-methylesterification of pectins in roots and affects root growth. The sequence is that of Pectinesterase inhibitor 9 from Arabidopsis thaliana (Mouse-ear cress).